A 104-amino-acid chain; its full sequence is Protein RnfH (104 aa).

This sequence belongs to the UPF0125 (RnfH) family.

This is Protein RnfH from Pseudomonas fluorescens (strain ATCC BAA-477 / NRRL B-23932 / Pf-5).